A 139-amino-acid polypeptide reads, in one-letter code: Tol-Pal system protein TolR (139 aa).

Residues 15-35 traverse the membrane as a helical segment; that stretch reads IVPFLDVLLVLVLIFMATAPI.

This sequence belongs to the ExbD/TolR family. In terms of assembly, the Tol-Pal system is composed of five core proteins: the inner membrane proteins TolA, TolQ and TolR, the periplasmic protein TolB and the outer membrane protein Pal. They form a network linking the inner and outer membranes and the peptidoglycan layer.

Its subcellular location is the cell inner membrane. Functionally, part of the Tol-Pal system, which plays a role in outer membrane invagination during cell division and is important for maintaining outer membrane integrity. The chain is Tol-Pal system protein TolR from Haemophilus influenzae (strain ATCC 51907 / DSM 11121 / KW20 / Rd).